A 175-amino-acid chain; its full sequence is Development-specific protein S homolog (175 aa).

Beta/gamma crystallin 'Greek key' domains follow at residues 2 to 46 and 48 to 86; these read ANIT…KVPP and VKAI…KVMS. The segment at 87 to 90 is connecting peptide; the sequence is VPVQ. 2 consecutive Beta/gamma crystallin 'Greek key' domains span residues 91–135 and 136–175; these read PRAR…KPEG and LKVV…RITP.

The protein belongs to the beta/gamma-crystallin family.

The protein localises to the spore. Its subcellular location is the perispore. In Myxococcus xanthus, this protein is Development-specific protein S homolog (ops).